The following is a 465-amino-acid chain: ATP synthase subunit beta (465 aa).

ATP is bound at residue 148 to 155 (GGAGVGKT).

This sequence belongs to the ATPase alpha/beta chains family. As to quaternary structure, F-type ATPases have 2 components, CF(1) - the catalytic core - and CF(0) - the membrane proton channel. CF(1) has five subunits: alpha(3), beta(3), gamma(1), delta(1), epsilon(1). CF(0) has three main subunits: a(1), b(2) and c(9-12). The alpha and beta chains form an alternating ring which encloses part of the gamma chain. CF(1) is attached to CF(0) by a central stalk formed by the gamma and epsilon chains, while a peripheral stalk is formed by the delta and b chains.

Its subcellular location is the cell inner membrane. It carries out the reaction ATP + H2O + 4 H(+)(in) = ADP + phosphate + 5 H(+)(out). Produces ATP from ADP in the presence of a proton gradient across the membrane. The catalytic sites are hosted primarily by the beta subunits. The sequence is that of ATP synthase subunit beta from Chromobacterium violaceum (strain ATCC 12472 / DSM 30191 / JCM 1249 / CCUG 213 / NBRC 12614 / NCIMB 9131 / NCTC 9757 / MK).